We begin with the raw amino-acid sequence, 3432 residues long: Hybrid signal transduction histidine kinase G (3432 aa).

Low complexity-rich tracts occupy residues 44 to 68 (HFSN…TTTN), 76 to 90 (SQLQ…QQNN), and 126 to 145 (QPQQ…SQKQ). Disordered regions lie at residues 44 to 109 (HFSN…TNSS) and 124 to 240 (DDQP…HNIN). Residues 146–157 (TSQLNISGNNSG) show a composition bias toward polar residues. Low complexity-rich tracts occupy residues 165-177 (TISN…NFIH) and 187-238 (KTPI…NNHN). Residues 263-792 (LSFKHGYNSG…YGLKKDLEMF (530 aa)) enclose the Protein kinase domain. ATP contacts are provided by residues 269 to 277 (YNSGLGGNF) and K305. A compositionally biased stretch (low complexity) spans 399–419 (NNNNNNNNSYNNNYNNNNNNN). 2 disordered regions span residues 399 to 426 (NNNN…TSPI) and 443 to 542 (FQLN…STPL). Residues 443–467 (FQLNSSTNSTGSPLIITSQPMPFQL) are compositionally biased toward polar residues. Positions 468–479 (NSNSNTTASSSS) are enriched in low complexity. Residues 480-490 (PITHSNLNTAI) are compositionally biased toward polar residues. The segment covering 491–508 (TSTTTSNSNSNNNSNNNN) has biased composition (low complexity). A compositionally biased stretch (gly residues) spans 509–525 (SGGGGGGGGGGGGGGGT). Catalysis depends on D585, which acts as the Proton acceptor; for protein kinase activity. Residues 863 to 1121 (GKEFIIVSGL…TMKIVLKNLD (259 aa)) form an AAA region. 871 to 878 (GLSGVGKT) contributes to the ATP binding site. Disordered regions lie at residues 1040 to 1077 (NNFS…NNNI) and 1261 to 1290 (TTTT…NNSD). The span at 1261–1288 (TTTTNNNTTNNTNNNNTNNNNNNTNGNN) shows a compositional bias: low complexity. Transmembrane regions (helical) follow at residues 1567-1587 (VMVI…TLLL) and 1599-1619 (ISSW…IGHF). The stretch at 1965–1998 (SQLMLAKAEFERINGNFEQAMEYFSEAISLAQQF) is one TPR repeat. Disordered stretches follow at residues 2071 to 2095 (EYSN…QASI) and 2299 to 2349 (GYNN…NNNK). A compositionally biased stretch (low complexity) spans 2073–2095 (SNNNNNNNSNNNNNNANQSQASI). Residues 2215–2465 (YFDRLLKRLM…SNARLFIKVN (251 aa)) form the GAF domain. The region spanning 2491-2769 (NMSHEMRTPL…TFHFCVELGK (279 aa)) is the Histidine kinase domain. H2494 carries the phosphohistidine; by autocatalysis modification. Residues 2637–2648 (TTTNNKKQLNTD) show a composition bias toward low complexity. Disordered stretches follow at residues 2637–2673 (TTTN…SIDL), 2785–2815 (LLNN…NNNN), 2917–3030 (LSPK…NNNS), 3134–3160 (NNNI…HSQY), and 3247–3281 (NSIS…TITT). The segment covering 2649 to 2673 (NDGDDDDDDDNENLDENNEDTSIDL) has biased composition (acidic residues). Low complexity-rich tracts occupy residues 2787 to 2815 (NNNN…NNNN), 2935 to 3029 (LSSS…HNNN), and 3134 to 3145 (NNNINNINNNNN). The region spanning 3305 to 3424 (KILIVEDNEM…DLRYVINRYG (120 aa)) is the Response regulatory domain. A 4-aspartylphosphate modification is found at D3356.

Belongs to the protein kinase superfamily. Ser/Thr protein kinase family. In terms of processing, activation probably requires transfer of a phosphate group between a histidine in the kinase core (transmitter) domain and an aspartate of the receiver domain.

The protein resides in the membrane. The enzyme catalyses ATP + protein L-histidine = ADP + protein N-phospho-L-histidine.. It carries out the reaction L-seryl-[protein] + ATP = O-phospho-L-seryl-[protein] + ADP + H(+). The catalysed reaction is L-threonyl-[protein] + ATP = O-phospho-L-threonyl-[protein] + ADP + H(+). Its function is as follows. Acts as a receptor histidine kinase for a signal transduction pathway. This protein undergoes an ATP-dependent autophosphorylation at a conserved histidine residue in the kinase core, and a phosphoryl group is then transferred to a conserved aspartate residue in the receiver domain. This chain is Hybrid signal transduction histidine kinase G (dhkG), found in Dictyostelium discoideum (Social amoeba).